A 458-amino-acid chain; its full sequence is 3-isopropylmalate dehydratase large subunit (458 aa).

[4Fe-4S] cluster-binding residues include cysteine 339, cysteine 399, and cysteine 402.

This sequence belongs to the aconitase/IPM isomerase family. LeuC type 1 subfamily. Heterodimer of LeuC and LeuD. [4Fe-4S] cluster is required as a cofactor.

The catalysed reaction is (2R,3S)-3-isopropylmalate = (2S)-2-isopropylmalate. Its pathway is amino-acid biosynthesis; L-leucine biosynthesis; L-leucine from 3-methyl-2-oxobutanoate: step 2/4. Catalyzes the isomerization between 2-isopropylmalate and 3-isopropylmalate, via the formation of 2-isopropylmaleate. The sequence is that of 3-isopropylmalate dehydratase large subunit from Lactococcus lactis subsp. cremoris (strain SK11).